Consider the following 128-residue polypeptide: Cytochrome c-type biogenesis protein CcmE (128 aa).

Topologically, residues Met-1–Arg-8 are cytoplasmic. A helical; Signal-anchor for type II membrane protein transmembrane segment spans residues Leu-9–Asn-29. The Periplasmic portion of the chain corresponds to Leu-30–Ser-128. Residues His-120 and Tyr-124 each coordinate heme.

It belongs to the CcmE/CycJ family.

It is found in the cell inner membrane. Heme chaperone required for the biogenesis of c-type cytochromes. Transiently binds heme delivered by CcmC and transfers the heme to apo-cytochromes in a process facilitated by CcmF and CcmH. The sequence is that of Cytochrome c-type biogenesis protein CcmE from Rickettsia prowazekii (strain Madrid E).